Reading from the N-terminus, the 222-residue chain is Physcion biosynthesis cluster O-methyltransferase (222 aa).

The protein belongs to the methyltransferase superfamily.

It carries out the reaction emodin + S-adenosyl-L-methionine = physcion + S-adenosyl-L-homocysteine. The protein operates within secondary metabolite biosynthesis. O-methyltransferase; part of the gene cluster that mediates the biosynthesis of physcion, a natural anthraquinone fungicide that can prevent plant fungal infections. Within the pathway, the O-methyltransferase AcOMT catalyzes the last step by transferring a methyl group to C-6 hydroxyl of emodin to form physcion. AcOMT may also methylate the C-6 hydroxyl group of emodin anthrone to produce physcion-anthrone B. The pathway begins with the polyketide synthase AcPKS that condenses 8 malonyl-CoA units to synthesize atrochrysone thioester which is released from the synthase by the atrochrysone carboxyl ACP thioesterase AcTE that breaks the thioester bond and leads to free atrochrysone carboxylic acid. Spontaneous decarboxylation of atrochrysone carboxylic acid leads to the formation of atrochrysone. Then, atrochrysone undergoes spontaneous dehydration and oxidation, giving the products emodin anthrone and emodin. The O-methyltransferase AcOMT then methylates the C-6 hydroxyl of emodin to form physcion. The protein is Physcion biosynthesis cluster O-methyltransferase of Aspergillus chevalieri (Eurotium chevalieri).